Reading from the N-terminus, the 252-residue chain is Trypsin iota (252 aa).

Positions 1–19 are cleaved as a signal peptide; sequence MAVYGIVATVLVLLLLGDA. A propeptide spans 20–27 (activation peptide); that stretch reads SDVEATGR. The 223-residue stretch at 28–250 folds into the Peptidase S1 domain; it reads IIGGSDQLIR…LRPWIVKAAN (223 aa). Cysteines 53 and 69 form a disulfide. Active-site charge relay system residues include His68 and Asp113. 2 disulfide bridges follow: Cys175-Cys193 and Cys202-Cys226. Ser206 (charge relay system) is an active-site residue.

It belongs to the peptidase S1 family.

It is found in the secreted. Its subcellular location is the extracellular space. It carries out the reaction Preferential cleavage: Arg-|-Xaa, Lys-|-Xaa.. The chain is Trypsin iota (iotaTry) from Drosophila melanogaster (Fruit fly).